Reading from the N-terminus, the 266-residue chain is BTB/POZ domain-containing protein KCTD2 (266 aa).

An N-acetylalanine modification is found at A2. A disordered region spans residues 38-79; the sequence is GRHPADTAASPPPPRTAGARARTSGADGRRRGRPLGPAQRGR. A compositionally biased stretch (low complexity) spans 53–63; the sequence is TAGARARTSGA. The BTB domain maps to 76 to 174; that stretch reads QRGRYLLRDT…LVKERIRDNE (99 aa).

This chain is BTB/POZ domain-containing protein KCTD2 (Kctd2), found in Mus musculus (Mouse).